Reading from the N-terminus, the 634-residue chain is Threonine--tRNA ligase (634 aa).

One can recognise a TGS domain in the interval 1 to 61 (MINIRFPDGS…NSNCELRLIT (61 aa)). The interval 241–532 (DHRKIGKVLD…LIEHYAGNLP (292 aa)) is catalytic. Zn(2+) is bound by residues Cys332, His383, and His509.

This sequence belongs to the class-II aminoacyl-tRNA synthetase family. Homodimer. It depends on Zn(2+) as a cofactor.

The protein resides in the cytoplasm. It catalyses the reaction tRNA(Thr) + L-threonine + ATP = L-threonyl-tRNA(Thr) + AMP + diphosphate + H(+). Catalyzes the attachment of threonine to tRNA(Thr) in a two-step reaction: L-threonine is first activated by ATP to form Thr-AMP and then transferred to the acceptor end of tRNA(Thr). Also edits incorrectly charged L-seryl-tRNA(Thr). The polypeptide is Threonine--tRNA ligase (Francisella tularensis subsp. holarctica (strain OSU18)).